We begin with the raw amino-acid sequence, 197 residues long: Nucleoside triphosphate pyrophosphatase (197 aa).

The active-site Proton acceptor is Asp-71.

Belongs to the Maf family. It depends on a divalent metal cation as a cofactor.

The protein localises to the cytoplasm. The enzyme catalyses a ribonucleoside 5'-triphosphate + H2O = a ribonucleoside 5'-phosphate + diphosphate + H(+). It catalyses the reaction a 2'-deoxyribonucleoside 5'-triphosphate + H2O = a 2'-deoxyribonucleoside 5'-phosphate + diphosphate + H(+). In terms of biological role, nucleoside triphosphate pyrophosphatase. May have a dual role in cell division arrest and in preventing the incorporation of modified nucleotides into cellular nucleic acids. This Synechococcus sp. (strain JA-2-3B'a(2-13)) (Cyanobacteria bacterium Yellowstone B-Prime) protein is Nucleoside triphosphate pyrophosphatase.